We begin with the raw amino-acid sequence, 37 residues long: Small ribosomal subunit protein eS32 (37 aa).

The protein belongs to the eukaryotic ribosomal protein eS32 family. In terms of assembly, part of the small ribosomal subunit.

The chain is Small ribosomal subunit protein eS32 from Pyrococcus furiosus (strain ATCC 43587 / DSM 3638 / JCM 8422 / Vc1).